The sequence spans 3102 residues: Laminin subunit alpha lam-3 (3102 aa).

The signal sequence occupies residues 1-16 (MRLWLGLLAVSNIALG). N-linked (GlcNAc...) asparagine glycosylation is found at Asn19, Asn135, and Asn237. Positions 44–295 (SERGLFPNIF…SISDISIGGQ (252 aa)) constitute a Laminin N-terminal domain. 16 disulfide bridges follow: Cys296/Cys305, Cys298/Cys316, Cys318/Cys327, Cys330/Cys350, Cys353/Cys362, Cys355/Cys387, Cys390/Cys399, Cys402/Cys420, Cys423/Cys435, Cys425/Cys451, Cys453/Cys462, Cys465/Cys475, Cys478/Cys491, Cys480/Cys496, Cys498/Cys507, and Cys510/Cys525. 4 consecutive Laminin EGF-like domains span residues 296-352 (CICY…VCQQ), 353-422 (CQCF…ACRT), 423-477 (CECD…TCEP), and 478-527 (CPCN…GCQP). One can recognise a Laminin IV type A 1 domain in the interval 548–740 (INNIGWHLTD…QDTLMGGVEV (193 aa)). 31 disulfides stabilise this stretch: Cys774/Cys783, Cys776/Cys790, Cys793/Cys802, Cys805/Cys822, Cys825/Cys838, Cys827/Cys858, Cys861/Cys870, Cys873/Cys886, Cys889/Cys903, Cys891/Cys910, Cys913/Cys922, Cys925/Cys938, Cys941/Cys953, Cys943/Cys960, Cys962/Cys971, Cys974/Cys985, Cys988/Cys1000, Cys990/Cys1007, Cys1009/Cys1018, Cys1021/Cys1033, Cys1036/Cys1049, Cys1038/Cys1056, Cys1058/Cys1067, Cys1070/Cys1083, Cys1086/Cys1098, Cys1088/Cys1105, Cys1107/Cys1116, Cys1119/Cys1131, Cys1134/Cys1144, Cys1137/Cys1151, and Cys1153/Cys1162. Laminin EGF-like domains lie at 774-824 (CDCH…ACEQ), 825-888 (CECP…KCIE), 889-940 (CTCN…TCKP), 941-987 (CGCH…GCPA), 988-1035 (CDCN…GCQF), 1036-1085 (CHCN…GCED), 1086-1133 (CGCD…GCTE), 1134-1180 (CEPC…GCKL), 1181-1226 (CDCS…TCEP), and 1227-1283 (CGCN…GCTE). Asn796 carries N-linked (GlcNAc...) asparagine glycosylation. The N-linked (GlcNAc...) asparagine glycan is linked to Asn991. An N-linked (GlcNAc...) asparagine glycan is attached at Asn1027. N-linked (GlcNAc...) asparagine glycosylation occurs at Asn1076. The N-linked (GlcNAc...) asparagine glycan is linked to Asn1164. 9 disulfide bridges follow: Cys1165–Cys1178, Cys1181–Cys1193, Cys1183–Cys1200, Cys1202–Cys1211, Cys1214–Cys1224, Cys1227–Cys1246, Cys1229–Cys1252, Cys1254–Cys1263, and Cys1266–Cys1281. N-linked (GlcNAc...) asparagine glycosylation is present at Asn1288. One can recognise a Laminin IV type A 2 domain in the interval 1295–1496 (QSDLVWQQMY…STTKAIGVEK (202 aa)). 12 disulfides stabilise this stretch: Cys1540–Cys1549, Cys1542–Cys1556, Cys1559–Cys1568, Cys1571–Cys1587, Cys1590–Cys1603, Cys1592–Cys1614, Cys1617–Cys1626, Cys1629–Cys1644, Cys1647–Cys1659, Cys1649–Cys1666, Cys1668–Cys1677, and Cys1680–Cys1691. Laminin EGF-like domains follow at residues 1540–1589 (CSCH…ACTK), 1590–1646 (CACP…TCSP), and 1647–1693 (CDCH…VCTS). Residues Asn1717, Asn1734, Asn1777, Asn1806, Asn1839, Asn1875, Asn1969, Asn1984, and Asn2048 are each glycosylated (N-linked (GlcNAc...) asparagine). A disordered region spans residues 2061 to 2084 (EAVSKMLGSEGSESGDANEESLRS). Residues Asn2091, Asn2193, Asn2369, and Asn2479 are each glycosylated (N-linked (GlcNAc...) asparagine). Laminin G-like domains follow at residues 2467 to 2644 (SQRG…TDGC), 2652 to 2839 (DKII…IGMC), and 2913 to 3088 (RYGL…AKAC). A disulfide bond links Cys2617 and Cys2644. N-linked (GlcNAc...) asparagine glycosylation is found at Asn2672 and Asn2686. Cys2814 and Cys2839 form a disulfide bridge. N-linked (GlcNAc...) asparagine glycosylation is found at Asn2932, Asn2959, and Asn3007. Cys3058 and Cys3088 are disulfide-bonded.

In terms of assembly, laminin is a complex glycoprotein, consisting of three different polypeptide chains (alpha, beta, gamma), which are bound to each other by disulfide bonds into a cross-shaped molecule comprising one long and three short arms with globules at each end.

It localises to the secreted. The protein resides in the extracellular space. Its subcellular location is the extracellular matrix. The protein localises to the basement membrane. Functionally, binding to cells via a high affinity receptor, laminin is thought to mediate the attachment, migration and organization of cells into tissues during embryonic development by interacting with other extracellular matrix components. Required to assemble a stable basement membrane and for organizing receptor complexes and cytoskeletal components to the proper cell surfaces. During embryogenesis, does not require the presence of collagen type IV in order to associate with cell surfaces, prior to assembly of the prototypical basement membrane. Plays an important role in muscle contraction of the body. Probably plays a distinct role from the related laminin subunit alpha epi-1. The sequence is that of Laminin subunit alpha lam-3 from Caenorhabditis elegans.